A 265-amino-acid polypeptide reads, in one-letter code: Ubiquinone biosynthesis protein COQ4 homolog, mitochondrial (265 aa).

Residues 1-30 (MATLLRPVLRRLCGLPGLQRPAAEMPLRAR) constitute a mitochondrion transit peptide. Serine 108 bears the Phosphoserine mark. Zn(2+) is bound by residues histidine 163, aspartate 164, histidine 167, and glutamate 179.

It belongs to the COQ4 family. As to quaternary structure, component of a multi-subunit COQ enzyme complex, composed of at least COQ3, COQ4, COQ5, COQ6, COQ7 and COQ9. The cofactor is Zn(2+). As to expression, expressed ubiquitously, but at high levels in liver, lung and pancreas.

The protein resides in the mitochondrion inner membrane. The enzyme catalyses 4-hydroxy-3-methoxy-5-(all-trans-decaprenyl)benzoate + H(+) = 2-methoxy-6-(all-trans-decaprenyl)phenol + CO2. It participates in cofactor biosynthesis; ubiquinone biosynthesis. Lyase that catalyzes the C1-decarboxylation of 4-hydroxy-3-methoxy-5-(all-trans-decaprenyl)benzoic acid into 2-methoxy-6-(all-trans-decaprenyl)phenol during ubiquinone biosynthesis. The chain is Ubiquinone biosynthesis protein COQ4 homolog, mitochondrial from Homo sapiens (Human).